The sequence spans 343 residues: Ribosomal RNA small subunit methyltransferase C (343 aa).

It belongs to the methyltransferase superfamily. RsmC family. In terms of assembly, monomer.

Its subcellular location is the cytoplasm. The catalysed reaction is guanosine(1207) in 16S rRNA + S-adenosyl-L-methionine = N(2)-methylguanosine(1207) in 16S rRNA + S-adenosyl-L-homocysteine + H(+). In terms of biological role, specifically methylates the guanine in position 1207 of 16S rRNA in the 30S particle. In Shigella sonnei (strain Ss046), this protein is Ribosomal RNA small subunit methyltransferase C.